A 109-amino-acid chain; its full sequence is Thiosulfate sulfurtransferase GlpE (109 aa).

Residues 16 to 104 (REQGAVVVDI…WRSTYPAETA (89 aa)) form the Rhodanese domain. The active-site Cysteine persulfide intermediate is the cysteine 64.

Belongs to the GlpE family.

The protein resides in the cytoplasm. It catalyses the reaction thiosulfate + hydrogen cyanide = thiocyanate + sulfite + 2 H(+). It carries out the reaction thiosulfate + [thioredoxin]-dithiol = [thioredoxin]-disulfide + hydrogen sulfide + sulfite + 2 H(+). Its function is as follows. Transferase that catalyzes the transfer of sulfur from thiosulfate to thiophilic acceptors such as cyanide or dithiols. May function in a CysM-independent thiosulfate assimilation pathway by catalyzing the conversion of thiosulfate to sulfite, which can then be used for L-cysteine biosynthesis. The sequence is that of Thiosulfate sulfurtransferase GlpE from Pseudomonas fluorescens (strain ATCC BAA-477 / NRRL B-23932 / Pf-5).